Consider the following 275-residue polypeptide: MSTYFVGDLHGCFDELQKLLERVRFDPVKDKLYFTGDLIARGEKSLECLRFVKNLGTSAQTVLGNHDLHLLACAYGIKKVKTRDNLTALFAAPDFDELMDWLRQQPLLVHNDHFNFSLVHAGISPDWDMATAQACAREVEAVLRQGDYRALLRQMYDSRPERWSSDLQGIERLRYSINVFTRMRFCYADHRLDFDCKLPLEQAPSELMPWFACDNPLFKTENIIFGHWASLVDCPTPGNIYALDTGCAWGNRMTLLRWDDKRIFSQSAVKKTGVF.

The protein belongs to the Ap4A hydrolase family.

It catalyses the reaction P(1),P(4)-bis(5'-adenosyl) tetraphosphate + H2O = 2 ADP + 2 H(+). Hydrolyzes diadenosine 5',5'''-P1,P4-tetraphosphate to yield ADP. This is Bis(5'-nucleosyl)-tetraphosphatase, symmetrical from Actinobacillus succinogenes (strain ATCC 55618 / DSM 22257 / CCUG 43843 / 130Z).